The primary structure comprises 679 residues: Methionine--tRNA ligase (679 aa).

4 residues coordinate Zn(2+): C147, C150, C160, and C163. The 'KMSKS' region motif lies at 332–336; that stretch reads KISTS. T335 is a binding site for ATP. The 102-residue stretch at 578–679 folds into the tRNA-binding domain; the sequence is DFMKLDIRVG…REVKPGSEVK (102 aa).

The protein belongs to the class-I aminoacyl-tRNA synthetase family. MetG type 1 subfamily. In terms of assembly, homodimer. Zn(2+) serves as cofactor.

Its subcellular location is the cytoplasm. It catalyses the reaction tRNA(Met) + L-methionine + ATP = L-methionyl-tRNA(Met) + AMP + diphosphate. Is required not only for elongation of protein synthesis but also for the initiation of all mRNA translation through initiator tRNA(fMet) aminoacylation. The chain is Methionine--tRNA ligase from Bacteroides fragilis (strain YCH46).